Consider the following 234-residue polypeptide: Immune-associated nucleotide-binding protein 2 (234 aa).

An AIG1-type G domain is found at 21–223 (KPVKNIVLVG…YTEDMYRNIK (203 aa)). Residues 30–38 (GRSVNGICT), Ser51, and Asn183 contribute to the GTP site.

It belongs to the TRAFAC class TrmE-Era-EngA-EngB-Septin-like GTPase superfamily. AIG1/Toc34/Toc159-like paraseptin GTPase family. IAN subfamily. Mostly expressed in pollen. Also detected in lateral roots and radicles.

This Arabidopsis thaliana (Mouse-ear cress) protein is Immune-associated nucleotide-binding protein 2.